A 415-amino-acid chain; its full sequence is Homoserine O-succinyltransferase (415 aa).

The segment covering 1–26 (MTSPALTAASVTPSRNTTSPDTTSHR) has biased composition (polar residues). Positions 1 to 27 (MTSPALTAASVTPSRNTTSPDTTSHRP) are disordered. Positions 71–386 (NAVLICHALN…HGHDAFLLED (316 aa)) constitute an AB hydrolase-1 domain. Serine 177 serves as the catalytic Nucleophile. Arginine 247 lines the substrate pocket. Active-site residues include aspartate 346 and histidine 379. Aspartate 380 contacts substrate.

Belongs to the AB hydrolase superfamily. MetX family. Homodimer.

The protein resides in the cytoplasm. It catalyses the reaction L-homoserine + succinyl-CoA = O-succinyl-L-homoserine + CoA. The protein operates within amino-acid biosynthesis; L-methionine biosynthesis via de novo pathway; O-succinyl-L-homoserine from L-homoserine: step 1/1. Transfers a succinyl group from succinyl-CoA to L-homoserine, forming succinyl-L-homoserine. In Bordetella avium (strain 197N), this protein is Homoserine O-succinyltransferase.